A 214-amino-acid polypeptide reads, in one-letter code: Oxaloacetate tautomerase fahd-1, mitochondrial (214 aa).

The Mg(2+) site is built by E65, E67, and D96.

Belongs to the FAH family. The cofactor is Mg(2+). It depends on Mn(2+) as a cofactor. In terms of tissue distribution, widely expressed.

It localises to the mitochondrion. It catalyses the reaction oxaloacetate = enol-oxaloacetate. Functionally, tautomerase that converts enol-oxaloacetate, a strong inhibitor of succinate dehydrogenase, to the physiological keto form of oxaloacetate. This Caenorhabditis elegans protein is Oxaloacetate tautomerase fahd-1, mitochondrial.